Reading from the N-terminus, the 364-residue chain is Aspartate aminotransferase (364 aa).

L-aspartate is bound by residues G23, W99, and N143. The residue at position 200 (K200) is an N6-(pyridoxal phosphate)lysine. Residue R320 coordinates L-aspartate.

Belongs to the class-I pyridoxal-phosphate-dependent aminotransferase family. In terms of assembly, homodimer. Pyridoxal 5'-phosphate is required as a cofactor.

It localises to the cytoplasm. The enzyme catalyses L-aspartate + 2-oxoglutarate = oxaloacetate + L-glutamate. The sequence is that of Aspartate aminotransferase (aspC) from Thermococcus kodakarensis (strain ATCC BAA-918 / JCM 12380 / KOD1) (Pyrococcus kodakaraensis (strain KOD1)).